A 411-amino-acid polypeptide reads, in one-letter code: Argininosuccinate synthase (411 aa).

ATP contacts are provided by residues 13-21 (AYSGGLDTS) and alanine 40. Tyrosine 91 and serine 96 together coordinate L-citrulline. An ATP-binding site is contributed by glycine 121. 3 residues coordinate L-aspartate: threonine 123, asparagine 127, and aspartate 128. Asparagine 127 is an L-citrulline binding site. Residues arginine 131, serine 182, serine 191, glutamate 267, and tyrosine 279 each contribute to the L-citrulline site.

It belongs to the argininosuccinate synthase family. Type 1 subfamily. As to quaternary structure, homotetramer.

It localises to the cytoplasm. The enzyme catalyses L-citrulline + L-aspartate + ATP = 2-(N(omega)-L-arginino)succinate + AMP + diphosphate + H(+). Its pathway is amino-acid biosynthesis; L-arginine biosynthesis; L-arginine from L-ornithine and carbamoyl phosphate: step 2/3. The sequence is that of Argininosuccinate synthase from Bartonella tribocorum (strain CIP 105476 / IBS 506).